The sequence spans 298 residues: MTDLHTDVERYLRYLSVERQLSPITLLNYQRQLEAIINFASENGLQSWQQCDVTMVRNFAVRSRRKGLGAASLALRLSALRSFFDWLVSQNELKANPAKGVSAPKAPRHLPKNIDVDDMNRLLDIDINDPLAVRDRAMLEVMYGAGLRLSELVGLDIKHLDLESGEVWVMGKGSKERRLPIGRNAVAWIEHWLDLRDLFGSEDDALFLSKLGKRISARNVQKRFAEWGIKQGLNNHVHPHKLRHSFATHMLESSGDLRGVQELLGHANLSTTQIYTHLDFQHLASVYDAAHPRAKRGK.

The 87-residue stretch at 2–88 (TDLHTDVERY…ALRSFFDWLV (87 aa)) folds into the Core-binding (CB) domain. Residues 109–288 (HLPKNIDVDD…DFQHLASVYD (180 aa)) form the Tyr recombinase domain. Active-site residues include R148, K172, H240, R243, and H266. Y275 acts as the O-(3'-phospho-DNA)-tyrosine intermediate in catalysis.

The protein belongs to the 'phage' integrase family. XerC subfamily. In terms of assembly, forms a cyclic heterotetrameric complex composed of two molecules of XerC and two molecules of XerD, in which XerC interacts with XerD via its C-terminal region, XerD interacts with XerC via its C-terminal region and so on.

The protein localises to the cytoplasm. Its activity is regulated as follows. FtsK may regulate the catalytic switch between XerC and XerD in the heterotetrameric complex during the two steps of the recombination process. Its function is as follows. Site-specific tyrosine recombinase, which acts by catalyzing the cutting and rejoining of the recombining DNA molecules. Binds cooperatively to specific DNA consensus sequences that are separated from XerD binding sites by a short central region, forming the heterotetrameric XerC-XerD complex that recombines DNA substrates. The complex is essential to convert dimers of the bacterial chromosome into monomers to permit their segregation at cell division. It also contributes to the segregational stability of plasmids. In the complex XerC specifically exchanges the top DNA strands. This Escherichia coli (strain 55989 / EAEC) protein is Tyrosine recombinase XerC.